A 407-amino-acid polypeptide reads, in one-letter code: Tyrosine--tRNA ligase (407 aa).

Position 35 (Y35) interacts with L-tyrosine. The 'HIGH' region signature appears at 40–49 (PTADSLHVGH). Residues Y168 and Q172 each coordinate L-tyrosine. Residues 228 to 232 (KMGKT) carry the 'KMSKS' region motif. Residue K231 coordinates ATP. An S4 RNA-binding domain is found at 341–405 (NLLVDLLVKC…RGKKNFNRIV (65 aa)).

Belongs to the class-I aminoacyl-tRNA synthetase family. TyrS type 1 subfamily. In terms of assembly, homodimer.

It is found in the cytoplasm. It carries out the reaction tRNA(Tyr) + L-tyrosine + ATP = L-tyrosyl-tRNA(Tyr) + AMP + diphosphate + H(+). Its function is as follows. Catalyzes the attachment of tyrosine to tRNA(Tyr) in a two-step reaction: tyrosine is first activated by ATP to form Tyr-AMP and then transferred to the acceptor end of tRNA(Tyr). The sequence is that of Tyrosine--tRNA ligase from Clostridium botulinum (strain Kyoto / Type A2).